The chain runs to 338 residues: GTPase Obg (338 aa).

The 159-residue stretch at 1–159 folds into the Obg domain; the sequence is MQFIDQAEIE…RRIRLELKLL (159 aa). In terms of domain architecture, OBG-type G spans 160 to 328; it reads AEVGIIGLPN…MLQATWEQLD (169 aa). Residues 166–173, 191–195, 213–216, 280–283, and 309–311 contribute to the GTP site; these read GLPNAGKS, FTTLI, DIPG, NKLD, and SAV. The Mg(2+) site is built by Ser173 and Thr193.

Belongs to the TRAFAC class OBG-HflX-like GTPase superfamily. OBG GTPase family. As to quaternary structure, monomer. It depends on Mg(2+) as a cofactor.

It localises to the cytoplasm. An essential GTPase which binds GTP, GDP and possibly (p)ppGpp with moderate affinity, with high nucleotide exchange rates and a fairly low GTP hydrolysis rate. Plays a role in control of the cell cycle, stress response, ribosome biogenesis and in those bacteria that undergo differentiation, in morphogenesis control. In Gloeothece citriformis (strain PCC 7424) (Cyanothece sp. (strain PCC 7424)), this protein is GTPase Obg.